We begin with the raw amino-acid sequence, 232 residues long: Small ribosomal subunit protein uS2 (232 aa).

This sequence belongs to the universal ribosomal protein uS2 family.

This is Small ribosomal subunit protein uS2 from Baumannia cicadellinicola subsp. Homalodisca coagulata.